A 149-amino-acid polypeptide reads, in one-letter code: SsrA-binding protein (149 aa).

It belongs to the SmpB family.

It is found in the cytoplasm. Its function is as follows. Required for rescue of stalled ribosomes mediated by trans-translation. Binds to transfer-messenger RNA (tmRNA), required for stable association of tmRNA with ribosomes. tmRNA and SmpB together mimic tRNA shape, replacing the anticodon stem-loop with SmpB. tmRNA is encoded by the ssrA gene; the 2 termini fold to resemble tRNA(Ala) and it encodes a 'tag peptide', a short internal open reading frame. During trans-translation Ala-aminoacylated tmRNA acts like a tRNA, entering the A-site of stalled ribosomes, displacing the stalled mRNA. The ribosome then switches to translate the ORF on the tmRNA; the nascent peptide is terminated with the 'tag peptide' encoded by the tmRNA and targeted for degradation. The ribosome is freed to recommence translation, which seems to be the essential function of trans-translation. The protein is SsrA-binding protein of Anaplasma marginale (strain Florida).